A 350-amino-acid polypeptide reads, in one-letter code: Protein RecA (350 aa).

Residue Gly68 to Thr75 coordinates ATP.

Belongs to the RecA family.

It is found in the cytoplasm. Can catalyze the hydrolysis of ATP in the presence of single-stranded DNA, the ATP-dependent uptake of single-stranded DNA by duplex DNA, and the ATP-dependent hybridization of homologous single-stranded DNAs. It interacts with LexA causing its activation and leading to its autocatalytic cleavage. The polypeptide is Protein RecA (Symbiobacterium thermophilum (strain DSM 24528 / JCM 14929 / IAM 14863 / T)).